The sequence spans 160 residues: Large ribosomal subunit protein eL21 (160 aa).

Basic and acidic residues-rich tracts occupy residues 112–123 and 136–145; these read NDQKKKEAKEKG and REAHFVRTNG. Residues 112-145 are disordered; sequence NDQKKKEAKEKGTWVQLKRQPAPPREAHFVRTNG.

This sequence belongs to the eukaryotic ribosomal protein eL21 family. As to quaternary structure, component of the large ribosomal subunit.

The protein localises to the cytoplasm. It localises to the cytosol. Its subcellular location is the endoplasmic reticulum. Component of the large ribosomal subunit. The ribosome is a large ribonucleoprotein complex responsible for the synthesis of proteins in the cell. The protein is Large ribosomal subunit protein eL21 (RPL21) of Capra hircus (Goat).